We begin with the raw amino-acid sequence, 290 residues long: 33 kDa chaperonin (290 aa).

Intrachain disulfides connect Cys235–Cys237 and Cys268–Cys271.

This sequence belongs to the HSP33 family. In terms of processing, under oxidizing conditions two disulfide bonds are formed involving the reactive cysteines. Under reducing conditions zinc is bound to the reactive cysteines and the protein is inactive.

It is found in the cytoplasm. In terms of biological role, redox regulated molecular chaperone. Protects both thermally unfolding and oxidatively damaged proteins from irreversible aggregation. Plays an important role in the bacterial defense system toward oxidative stress. In Streptococcus pyogenes serotype M6 (strain ATCC BAA-946 / MGAS10394), this protein is 33 kDa chaperonin.